A 293-amino-acid chain; its full sequence is FAS1 domain-containing protein DEHA2G15708g (293 aa).

An N-terminal signal peptide occupies residues 1–18 (MKLSSILYVSVLAHLVMS). Residues 76-87 (DHIGENEKREAK) are compositionally biased toward basic and acidic residues. Residues 76–126 (DHIGENEKREAKNVYNLQSLKEGLDDENDKREGNVNKPEVSEEGSNKGDKR) are disordered. The FAS1 domain maps to 141-290 (QNLLQSILPQ…GYIFVINDVL (150 aa)).

Its subcellular location is the vacuole. The chain is FAS1 domain-containing protein DEHA2G15708g from Debaryomyces hansenii (strain ATCC 36239 / CBS 767 / BCRC 21394 / JCM 1990 / NBRC 0083 / IGC 2968) (Yeast).